The sequence spans 542 residues: CTP synthase (542 aa).

The amidoligase domain stretch occupies residues 1 to 265; that stretch reads MTAFIFITGG…GRMLTELLKV (265 aa). Residue Ser-13 coordinates CTP. A UTP-binding site is contributed by Ser-13. 14-19 lines the ATP pocket; that stretch reads SVGKGI. Tyr-54 contacts L-glutamine. Asp-71 is a binding site for ATP. Mg(2+)-binding residues include Asp-71 and Glu-140. Residues 147–149, 186–191, and Lys-222 contribute to the CTP site; these read DYE and KTKPLQ. UTP contacts are provided by residues 186–191 and Lys-222; that span reads KTKPLQ. The Glutamine amidotransferase type-1 domain maps to 297 to 532; sequence YVKLRDAYIS…LKAALARKMG (236 aa). Residue Gly-352 coordinates L-glutamine. The Nucleophile; for glutamine hydrolysis role is filled by Cys-379. L-glutamine-binding positions include 380–383, Glu-403, and Arg-460; that span reads YGMQ. Active-site residues include His-505 and Glu-507.

Belongs to the CTP synthase family. In terms of assembly, homotetramer.

It catalyses the reaction UTP + L-glutamine + ATP + H2O = CTP + L-glutamate + ADP + phosphate + 2 H(+). The catalysed reaction is L-glutamine + H2O = L-glutamate + NH4(+). The enzyme catalyses UTP + NH4(+) + ATP = CTP + ADP + phosphate + 2 H(+). It functions in the pathway pyrimidine metabolism; CTP biosynthesis via de novo pathway; CTP from UDP: step 2/2. Allosterically activated by GTP, when glutamine is the substrate; GTP has no effect on the reaction when ammonia is the substrate. The allosteric effector GTP functions by stabilizing the protein conformation that binds the tetrahedral intermediate(s) formed during glutamine hydrolysis. Inhibited by the product CTP, via allosteric rather than competitive inhibition. Functionally, catalyzes the ATP-dependent amination of UTP to CTP with either L-glutamine or ammonia as the source of nitrogen. Regulates intracellular CTP levels through interactions with the four ribonucleotide triphosphates. The sequence is that of CTP synthase from Caldivirga maquilingensis (strain ATCC 700844 / DSM 13496 / JCM 10307 / IC-167).